Consider the following 127-residue polypeptide: Major sperm protein 2 (127 aa).

The residue at position 2 (Ala-2) is an N-acetylalanine. Positions 9–126 (DIHTQPGSKI…RRKNLPIEYN (118 aa)) constitute an MSP domain.

Sperm.

It is found in the cell projection. It localises to the pseudopodium. The protein localises to the cytoplasm. Its subcellular location is the cytoskeleton. Its function is as follows. Central component in molecular interactions underlying sperm crawling. Forms an extensive filament system that extends from sperm villipoda, along the leading edge of the pseudopod. The protein is Major sperm protein 2 of Onchocerca volvulus.